The primary structure comprises 258 residues: UPF0246 protein YaaA (258 aa).

The protein belongs to the UPF0246 family.

The polypeptide is UPF0246 protein YaaA (Escherichia coli (strain SMS-3-5 / SECEC)).